The sequence spans 161 residues: Large ribosomal subunit protein uL15 (161 aa).

The segment at 1–41 is disordered; the sequence is MTKLNELAPAPGSTKGRMRVGRGPGSGKGKTAGRGVKGQKA. Gly residues predominate over residues 22 to 36; that stretch reads RGPGSGKGKTAGRGV.

It belongs to the universal ribosomal protein uL15 family. Part of the 50S ribosomal subunit.

Functionally, binds to the 23S rRNA. This is Large ribosomal subunit protein uL15 from Caulobacter sp. (strain K31).